Reading from the N-terminus, the 272-residue chain is Shikimate dehydrogenase (NADP(+)) (272 aa).

Residues 14-16 and Thr-61 each bind shikimate; that span reads SKS. Lys-65 functions as the Proton acceptor in the catalytic mechanism. Residues Asn-86 and Asp-102 each contribute to the shikimate site. Residues 126–130, 150–155, and Met-214 each bind NADP(+); these read GAGGA and NRTASK. Tyr-216 is a binding site for shikimate. Gly-239 provides a ligand contact to NADP(+).

This sequence belongs to the shikimate dehydrogenase family. In terms of assembly, homodimer.

It carries out the reaction shikimate + NADP(+) = 3-dehydroshikimate + NADPH + H(+). It functions in the pathway metabolic intermediate biosynthesis; chorismate biosynthesis; chorismate from D-erythrose 4-phosphate and phosphoenolpyruvate: step 4/7. Its function is as follows. Involved in the biosynthesis of the chorismate, which leads to the biosynthesis of aromatic amino acids. Catalyzes the reversible NADPH linked reduction of 3-dehydroshikimate (DHSA) to yield shikimate (SA). In Pseudoalteromonas atlantica (strain T6c / ATCC BAA-1087), this protein is Shikimate dehydrogenase (NADP(+)).